Reading from the N-terminus, the 304-residue chain is Tyrosine recombinase XerC (304 aa).

A Core-binding (CB) domain is found at 2–88 (ANVKNFLTLF…ALRSFYKFLL (87 aa)). A Tyr recombinase domain is found at 109-294 (RIPKFLYEKE…SKDMLRKTYM (186 aa)). Residues Arg-149, Lys-173, His-246, Arg-249, and His-272 contribute to the active site. The active-site O-(3'-phospho-DNA)-tyrosine intermediate is the Tyr-281.

This sequence belongs to the 'phage' integrase family. XerC subfamily. In terms of assembly, forms a cyclic heterotetrameric complex composed of two molecules of XerC and two molecules of XerD.

It localises to the cytoplasm. In terms of biological role, site-specific tyrosine recombinase, which acts by catalyzing the cutting and rejoining of the recombining DNA molecules. The XerC-XerD complex is essential to convert dimers of the bacterial chromosome into monomers to permit their segregation at cell division. It also contributes to the segregational stability of plasmids. This is Tyrosine recombinase XerC from Bacillus licheniformis (strain ATCC 14580 / DSM 13 / JCM 2505 / CCUG 7422 / NBRC 12200 / NCIMB 9375 / NCTC 10341 / NRRL NRS-1264 / Gibson 46).